The chain runs to 325 residues: MALETNTHRSYSIIPCFIFVELVIMAGTVLLSYYFECTDTFQVHIQGFFCQDGNLMKPYPGTEDESFISPLVLYCVLAATPTAIIFIGEVTTYFIKSTRENLIVQEKMILTGECCYLNPLFRRIIRFIGVFAFGLFATDIFVNAGQVVTGNLTPYFLTVCKPNYTASDCLIYHQFINSANICTGDPEVIEKARRSFPSKHAALSIYSALYATMYITSTIKTKSSRLAKPVLCLGTLCCAFLTGLNRVSEYRNHCVDVIGGFILGTAIALFLGLCVVHNFKGLYGAQCKPKPEDPRGVPLMAFPRVESPLETLSAQNHSSSMTEVT.

3 helical membrane passes run 11-31, 67-87, and 127-147; these read YSII…TVLL, FISP…IIFI, and FIGV…AGQV. Asparagine 163 carries an N-linked (GlcNAc...) asparagine glycan. 3 helical membrane-spanning segments follow: residues 201 to 218, 230 to 247, and 257 to 277; these read AALS…ITST, VLCL…LNRV, and VIGG…CVVH. Asparagine 316 carries N-linked (GlcNAc...) asparagine glycosylation.

Belongs to the PA-phosphatase related phosphoesterase family.

The protein localises to the cell membrane. The protein resides in the cell projection. It localises to the neuron projection. Functionally, may play a role in neurite outgrowth and neurogenesis. The chain is Phospholipid phosphatase-related protein type 1 from Xenopus tropicalis (Western clawed frog).